A 130-amino-acid polypeptide reads, in one-letter code: Large-conductance mechanosensitive channel (130 aa).

Residues 1-14 lie on the Cytoplasmic side of the membrane; sequence MWNEFKAFAMRGNI. The helical transmembrane segment at 15–43 threads the bilayer; it reads VDLAIGVVIGGAFGKIVTSLVNDIIMPLV. The Extracellular segment spans residues 44-65; it reads GLLLGGLDFSGLSFTFGDAVVK. Residues 66 to 85 form a helical membrane-spanning segment; sequence YGSFIQTIVNFLIISFSIFI. Residues 86 to 130 are Cytoplasmic-facing; sequence VIRTLNGLRRKKEAEEEAAEEAVDAQEELLKEIRDLLKQQAKSPE.

This sequence belongs to the MscL family. Homopentamer.

The protein resides in the cell membrane. Channel that opens in response to stretch forces in the membrane lipid bilayer. Forms a nonselective ion channel with a conductance of about 4 nanosiemens. May participate in the regulation of osmotic pressure changes within the cell. This is Large-conductance mechanosensitive channel from Bacillus subtilis (strain 168).